The following is a 343-amino-acid chain: Methionine import ATP-binding protein MetN 1 (343 aa).

The 240-residue stretch at 2 to 241 (IKLSNITKVF…PKTPLAQKFI (240 aa)) folds into the ABC transporter domain. An ATP-binding site is contributed by 38–45 (GASGAGKS).

Belongs to the ABC transporter superfamily. Methionine importer (TC 3.A.1.24) family. As to quaternary structure, the complex is composed of two ATP-binding proteins (MetN), two transmembrane proteins (MetI) and a solute-binding protein (MetQ).

It localises to the cell inner membrane. It carries out the reaction L-methionine(out) + ATP + H2O = L-methionine(in) + ADP + phosphate + H(+). The enzyme catalyses D-methionine(out) + ATP + H2O = D-methionine(in) + ADP + phosphate + H(+). Its function is as follows. Part of the ABC transporter complex MetNIQ involved in methionine import. Responsible for energy coupling to the transport system. This chain is Methionine import ATP-binding protein MetN 1, found in Salmonella paratyphi A (strain ATCC 9150 / SARB42).